A 510-amino-acid chain; its full sequence is 2,3-bisphosphoglycerate-independent phosphoglycerate mutase (510 aa).

Positions 13 and 63 each coordinate Mn(2+). S63 serves as the catalytic Phosphoserine intermediate. Residues H124, 154–155 (RD), R186, R192, 262–265 (RADR), and K334 contribute to the substrate site. Residues D401, H405, D442, H443, and H461 each coordinate Mn(2+).

Belongs to the BPG-independent phosphoglycerate mutase family. As to quaternary structure, monomer. Mn(2+) is required as a cofactor.

It catalyses the reaction (2R)-2-phosphoglycerate = (2R)-3-phosphoglycerate. It functions in the pathway carbohydrate degradation; glycolysis; pyruvate from D-glyceraldehyde 3-phosphate: step 3/5. Functionally, catalyzes the interconversion of 2-phosphoglycerate and 3-phosphoglycerate. This is 2,3-bisphosphoglycerate-independent phosphoglycerate mutase from Aliivibrio fischeri (strain ATCC 700601 / ES114) (Vibrio fischeri).